The chain runs to 417 residues: UPF0754 membrane protein PCC8801_0398 (417 aa).

2 consecutive transmembrane segments (helical) span residues 11–31 (FSLL…GYFT) and 395–415 (IVNI…ILLI).

This sequence belongs to the UPF0754 family.

It is found in the cell inner membrane. This chain is UPF0754 membrane protein PCC8801_0398, found in Rippkaea orientalis (strain PCC 8801 / RF-1) (Cyanothece sp. (strain PCC 8801)).